Consider the following 416-residue polypeptide: Phosphoglycerate kinase (416 aa).

(2R)-3-phosphoglycerate contacts are provided by valine 23, aspartate 24, phenylalanine 25, asparagine 26, glutamine 38, arginine 39, serine 62, histidine 63, glycine 65, arginine 66, leucine 121, arginine 122, histidine 168, and arginine 169. Glycine 212 serves as a coordination point for ADP. Glycine 212 serves as a coordination point for CDP. AMP is bound by residues alanine 213 and lysine 214. Alanine 213 serves as a coordination point for ATP. Position 213 (alanine 213) interacts with Mg(2+). Aspartate 217 serves as a coordination point for CDP. Residue aspartate 217 participates in Mg(2+) binding. Lysine 218 contributes to the AMP binding site. Lysine 218 contributes to the ATP binding site. Glycine 236 contributes to the ADP binding site. Glycine 236 contributes to the CDP binding site. Residues glycine 237 and glycine 311 each coordinate AMP. ATP is bound by residues glycine 237 and glycine 311. Positions 336 and 341 each coordinate CDP. Phenylalanine 341 is a binding site for ADP. Glutamate 342 is a binding site for AMP. Positions 342, 373, and 374 each coordinate ATP. Aspartate 373 contacts Mg(2+).

Belongs to the phosphoglycerate kinase family. As to quaternary structure, monomer. Requires Mg(2+) as cofactor.

The protein resides in the cytoplasm. The protein localises to the mitochondrion. The catalysed reaction is (2R)-3-phosphoglycerate + ATP = (2R)-3-phospho-glyceroyl phosphate + ADP. Its pathway is carbohydrate degradation; glycolysis; pyruvate from D-glyceraldehyde 3-phosphate: step 2/5. Its function is as follows. Catalyzes one of the two ATP producing reactions in the glycolytic pathway via the reversible conversion of 1,3-diphosphoglycerate to 3-phosphoglycerate. Both L- and D- forms of purine and pyrimidine nucleotides can be used as substrates, but the activity is much lower on pyrimidines. Negatively regulates the biosynthesis of acetyl-CoA from pyruvate in the mitochondrion. This chain is Phosphoglycerate kinase (PGK1), found in Debaryomyces hansenii (strain ATCC 36239 / CBS 767 / BCRC 21394 / JCM 1990 / NBRC 0083 / IGC 2968) (Yeast).